The chain runs to 109 residues: Ribonuclease P protein component (109 aa).

This sequence belongs to the RnpA family. As to quaternary structure, consists of a catalytic RNA component (M1 or rnpB) and a protein subunit.

The catalysed reaction is Endonucleolytic cleavage of RNA, removing 5'-extranucleotides from tRNA precursor.. RNaseP catalyzes the removal of the 5'-leader sequence from pre-tRNA to produce the mature 5'-terminus. It can also cleave other RNA substrates such as 4.5S RNA. The protein component plays an auxiliary but essential role in vivo by binding to the 5'-leader sequence and broadening the substrate specificity of the ribozyme. This Mycoplasma capricolum subsp. capricolum (strain California kid / ATCC 27343 / NCTC 10154) protein is Ribonuclease P protein component.